The primary structure comprises 461 residues: tRNA modification GTPase MnmE (461 aa).

Positions 27, 89, and 128 each coordinate (6S)-5-formyl-5,6,7,8-tetrahydrofolate. Residues 224-382 (GLATAIVGQP…LEELINKLFF (159 aa)) enclose the TrmE-type G domain. N234 is a binding site for K(+). GTP contacts are provided by residues 234 to 239 (NVGKSS), 253 to 259 (TDVAGTT), and 278 to 281 (DTAG). Mg(2+) is bound at residue S238. Positions 253, 255, and 258 each coordinate K(+). T259 is a Mg(2+) binding site. K461 contacts (6S)-5-formyl-5,6,7,8-tetrahydrofolate.

It belongs to the TRAFAC class TrmE-Era-EngA-EngB-Septin-like GTPase superfamily. TrmE GTPase family. Homodimer. Heterotetramer of two MnmE and two MnmG subunits. Requires K(+) as cofactor.

Its subcellular location is the cytoplasm. In terms of biological role, exhibits a very high intrinsic GTPase hydrolysis rate. Involved in the addition of a carboxymethylaminomethyl (cmnm) group at the wobble position (U34) of certain tRNAs, forming tRNA-cmnm(5)s(2)U34. This is tRNA modification GTPase MnmE from Lactobacillus acidophilus (strain ATCC 700396 / NCK56 / N2 / NCFM).